Here is a 906-residue protein sequence, read N- to C-terminus: DNA mismatch repair protein MutS (906 aa).

656–663 is a binding site for ATP; that stretch reads GPNMAGKS.

Belongs to the DNA mismatch repair MutS family.

In terms of biological role, this protein is involved in the repair of mismatches in DNA. It is possible that it carries out the mismatch recognition step. This protein has a weak ATPase activity. The polypeptide is DNA mismatch repair protein MutS (Rhodopseudomonas palustris (strain BisA53)).